We begin with the raw amino-acid sequence, 498 residues long: Glycerol kinase (498 aa).

ADP is bound at residue Thr-12. ATP is bound by residues Thr-12, Thr-13, and Ser-14. Position 12 (Thr-12) interacts with sn-glycerol 3-phosphate. Arg-16 is an ADP binding site. Residues Arg-82, Glu-83, Tyr-134, and Asp-241 each contribute to the sn-glycerol 3-phosphate site. Residues Arg-82, Glu-83, Tyr-134, Asp-241, and Gln-242 each coordinate glycerol. Positions 263 and 310 each coordinate ADP. Residues Thr-263, Gly-310, Gln-314, and Gly-411 each coordinate ATP. Positions 411 and 415 each coordinate ADP.

This sequence belongs to the FGGY kinase family.

The catalysed reaction is glycerol + ATP = sn-glycerol 3-phosphate + ADP + H(+). Its pathway is polyol metabolism; glycerol degradation via glycerol kinase pathway; sn-glycerol 3-phosphate from glycerol: step 1/1. Its activity is regulated as follows. Inhibited by fructose 1,6-bisphosphate (FBP). Key enzyme in the regulation of glycerol uptake and metabolism. Catalyzes the phosphorylation of glycerol to yield sn-glycerol 3-phosphate. This chain is Glycerol kinase, found in Herminiimonas arsenicoxydans.